We begin with the raw amino-acid sequence, 65 residues long: Bacteriocin amylovorin-L (65 aa).

A propeptide spanning residues 1–15 (MKQLNSEQLQNIIGG) is cleaved from the precursor. Residues 39 to 59 (LGGVWGAVIGGVGGAAVCGLA) form a helical membrane-spanning segment.

In terms of assembly, active lactobin is composed of two different peptides, one which is lactobin A.

The protein localises to the secreted. Its subcellular location is the host cell membrane. In terms of biological role, this heat stable bacteriocin inhibits the growth of closely related Lactobacillus species. It may act as a pore-forming protein, creating a channel in the cell membrane. It kills Lactobacillus helveticus ATCC 15009, but displays no activity towards Listeria species. The polypeptide is Bacteriocin amylovorin-L (amyL) (Lactobacillus amylovorus).